The following is a 545-amino-acid chain: EH domain-containing protein 1 (545 aa).

EF-hand domains are found at residues 14-49 and 50-83; these read ENQMIYKEWFEFSDSDGDGRITGNDAIKFFTMSNLP and RPELKQIWAIADSKRQGYLGFKEFIVAMQLVSLA. The EH domain occupies 15–93; sequence NQMIYKEWFE…QTGHEISHEV (79 aa). Ca(2+) contacts are provided by Asp-27, Asp-29, Asp-31, Arg-33, Asp-38, Asp-61, Tyr-67, and Glu-72. The Dynamin-type G domain occupies 194 to 429; it reads FDAKPMVMLL…DLLADLKDIP (236 aa). Residues 204–211 form a G1 motif region; sequence GQYSTGKT. 204-211 is a GTP binding site; it reads GQYSTGKT. The G2 motif stretch occupies residues 230–231; the sequence is EP. The tract at residues 292 to 295 is G3 motif; that stretch reads DTPG. GTP contacts are provided by residues 309-313 and Lys-359; that span reads DFTGV. A G4 motif region spans residues 358 to 361; that stretch reads NKAD. Val-382 is a region of interest (G5 motif). 395–398 lines the GTP pocket; that stretch reads SFSD. Residues 467–490 adopt a coiled-coil conformation; the sequence is KAKAQQKLIDNLEDEFGKVQREHH.

This sequence belongs to the TRAFAC class dynamin-like GTPase superfamily. Dynamin/Fzo/YdjA family. EHD subfamily. As to quaternary structure, homooligomer, and heterooligomer with EHD2.

Its subcellular location is the endosome membrane. It localises to the cell membrane. The protein localises to the cytoplasm. The enzyme catalyses GTP + H2O = GDP + phosphate + H(+). Functionally, involved in endocytosis positive regulation. Acts in early endocytic membrane fusion and membrane trafficking of recycling endosomes. Confers salt tolerance. The polypeptide is EH domain-containing protein 1 (Arabidopsis thaliana (Mouse-ear cress)).